A 278-amino-acid polypeptide reads, in one-letter code: Probable CCR4-associated factor 1 homolog 5 (278 aa).

The a divalent metal cation site is built by Asp30, Glu32, Asp145, and Asp217.

The protein belongs to the CAF1 family. In terms of assembly, component of the CCR4-NOT complex, at least composed of CRR4 and CAF1 proteins. The cofactor is a divalent metal cation.

It is found in the nucleus. Its subcellular location is the cytoplasm. It carries out the reaction Exonucleolytic cleavage of poly(A) to 5'-AMP.. Its function is as follows. Ubiquitous transcription factor required for a diverse set of processes. It is a component of the CCR4 complex involved in the control of gene expression. The chain is Probable CCR4-associated factor 1 homolog 5 (CAF1-5) from Arabidopsis thaliana (Mouse-ear cress).